The following is a 102-amino-acid chain: Pole-localizer protein TmaR (102 aa).

A coiled-coil region spans residues 7–34 (IINQARRKNKLKRELQDNQKKIRDNQKR).

It belongs to the pole-localizer TmaR family.

The protein resides in the cytoplasm. In terms of biological role, pole-localizer protein involved in the regulation of several cellular processes. The chain is Pole-localizer protein TmaR from Aliivibrio salmonicida (strain LFI1238) (Vibrio salmonicida (strain LFI1238)).